Reading from the N-terminus, the 237-residue chain is Proteasome subunit alpha type-5-B (237 aa).

At methionine 1 the chain carries N-acetylmethionine. Glycyl lysine isopeptide (Lys-Gly) (interchain with G-Cter in ubiquitin) cross-links involve residues lysine 43, lysine 66, and lysine 185.

Belongs to the peptidase T1A family. In terms of assembly, component of the 20S core complex of the 26S proteasome. The 26S proteasome is composed of a core protease (CP), known as the 20S proteasome, capped at one or both ends by the 19S regulatory particle (RP/PA700). The 20S proteasome core is composed of 28 subunits that are arranged in four stacked rings, resulting in a barrel-shaped structure. The two end rings are each formed by seven alpha subunits, and the two central rings are each formed by seven beta subunits. The catalytic chamber with the active sites is on the inside of the barrel.

It is found in the cytoplasm. It localises to the nucleus. Functionally, the proteasome is a multicatalytic proteinase complex which is characterized by its ability to cleave peptides with Arg, Phe, Tyr, Leu, and Glu adjacent to the leaving group at neutral or slightly basic pH. The proteasome has an ATP-dependent proteolytic activity. This Arabidopsis thaliana (Mouse-ear cress) protein is Proteasome subunit alpha type-5-B (PAE2).